Consider the following 417-residue polypeptide: UDP-N-acetylglucosamine 1-carboxyvinyltransferase (417 aa).

Residue 22-23 participates in phosphoenolpyruvate binding; that stretch reads KN. Residue Arg-93 coordinates UDP-N-acetyl-alpha-D-glucosamine. Residue Cys-117 is the Proton donor of the active site. Cys-117 bears the 2-(S-cysteinyl)pyruvic acid O-phosphothioketal mark. Residues 122–126, Asp-304, and Ile-326 each bind UDP-N-acetyl-alpha-D-glucosamine; that span reads RPVDQ.

This sequence belongs to the EPSP synthase family. MurA subfamily.

The protein resides in the cytoplasm. The catalysed reaction is phosphoenolpyruvate + UDP-N-acetyl-alpha-D-glucosamine = UDP-N-acetyl-3-O-(1-carboxyvinyl)-alpha-D-glucosamine + phosphate. It participates in cell wall biogenesis; peptidoglycan biosynthesis. Cell wall formation. Adds enolpyruvyl to UDP-N-acetylglucosamine. In Neisseria meningitidis serogroup B (strain ATCC BAA-335 / MC58), this protein is UDP-N-acetylglucosamine 1-carboxyvinyltransferase.